Here is a 1252-residue protein sequence, read N- to C-terminus: DNA-directed RNA polymerase subunit beta (1252 aa).

Belongs to the RNA polymerase beta chain family. In terms of assembly, the RNAP catalytic core consists of 2 alpha, 1 beta, 1 beta' and 1 omega subunit. When a sigma factor is associated with the core the holoenzyme is formed, which can initiate transcription.

The catalysed reaction is RNA(n) + a ribonucleoside 5'-triphosphate = RNA(n+1) + diphosphate. DNA-dependent RNA polymerase catalyzes the transcription of DNA into RNA using the four ribonucleoside triphosphates as substrates. The polypeptide is DNA-directed RNA polymerase subunit beta (Chlamydia trachomatis serovar D (strain ATCC VR-885 / DSM 19411 / UW-3/Cx)).